A 165-amino-acid polypeptide reads, in one-letter code: Urease accessory protein UreE (165 aa).

The protein belongs to the UreE family.

Its subcellular location is the cytoplasm. Functionally, involved in urease metallocenter assembly. Binds nickel. Probably functions as a nickel donor during metallocenter assembly. The chain is Urease accessory protein UreE from Micrococcus luteus (strain ATCC 4698 / DSM 20030 / JCM 1464 / CCM 169 / CCUG 5858 / IAM 1056 / NBRC 3333 / NCIMB 9278 / NCTC 2665 / VKM Ac-2230) (Micrococcus lysodeikticus).